Consider the following 226-residue polypeptide: MLTWLQRDSFQFPPLAKAMREPNGLLAAGGDLSAERLISAYRHGCFPWFQDGQPILWWSPDPRTVLFPQELHISRSLAKLLRQQRYRVTFDQDFAAVIAACAAPRAYADGTWITRGMQEAYRQLHQRGIAHSVEVWQGEQLVGGLYGLAIGQLFFGESMFSRADNASKVGFATLVGKLQEWGFVLIDCQMPTQHLHSFGARAIPRATFADYLQRHLNLPSRADWLA.

It belongs to the L/F-transferase family.

Its subcellular location is the cytoplasm. The enzyme catalyses N-terminal L-lysyl-[protein] + L-leucyl-tRNA(Leu) = N-terminal L-leucyl-L-lysyl-[protein] + tRNA(Leu) + H(+). It catalyses the reaction N-terminal L-arginyl-[protein] + L-leucyl-tRNA(Leu) = N-terminal L-leucyl-L-arginyl-[protein] + tRNA(Leu) + H(+). It carries out the reaction L-phenylalanyl-tRNA(Phe) + an N-terminal L-alpha-aminoacyl-[protein] = an N-terminal L-phenylalanyl-L-alpha-aminoacyl-[protein] + tRNA(Phe). Its function is as follows. Functions in the N-end rule pathway of protein degradation where it conjugates Leu, Phe and, less efficiently, Met from aminoacyl-tRNAs to the N-termini of proteins containing an N-terminal arginine or lysine. The chain is Leucyl/phenylalanyl-tRNA--protein transferase from Ectopseudomonas mendocina (strain ymp) (Pseudomonas mendocina).